A 120-amino-acid polypeptide reads, in one-letter code: NAD(P)H-quinone oxidoreductase subunit 3, chloroplastic (120 aa).

3 consecutive transmembrane segments (helical) span residues 9–29 (IFWA…LISG), 64–84 (MFAL…PWAM), and 88–108 (VLGV…IVGS).

The protein belongs to the complex I subunit 3 family. NDH is composed of at least 16 different subunits, 5 of which are encoded in the nucleus.

The protein resides in the plastid. The protein localises to the chloroplast thylakoid membrane. It catalyses the reaction a plastoquinone + NADH + (n+1) H(+)(in) = a plastoquinol + NAD(+) + n H(+)(out). It carries out the reaction a plastoquinone + NADPH + (n+1) H(+)(in) = a plastoquinol + NADP(+) + n H(+)(out). NDH shuttles electrons from NAD(P)H:plastoquinone, via FMN and iron-sulfur (Fe-S) centers, to quinones in the photosynthetic chain and possibly in a chloroplast respiratory chain. The immediate electron acceptor for the enzyme in this species is believed to be plastoquinone. Couples the redox reaction to proton translocation, and thus conserves the redox energy in a proton gradient. This is NAD(P)H-quinone oxidoreductase subunit 3, chloroplastic from Calycanthus floridus var. glaucus (Eastern sweetshrub).